The following is a 439-amino-acid chain: ATP-dependent DNA helicase dda (439 aa).

Residue 32 to 39 (GPAGTGKT) coordinates ATP.

In terms of assembly, monomer. Interacts with UvsX and gene 32 protein.

The enzyme catalyses Couples ATP hydrolysis with the unwinding of duplex DNA at the replication fork by translocating in the 5'-3' direction. This creates two antiparallel DNA single strands (ssDNA). The leading ssDNA polymer is the template for DNA polymerase III holoenzyme which synthesizes a continuous strand.. The catalysed reaction is ATP + H2O = ADP + phosphate + H(+). Functionally, DNA helicase that stimulates viral DNA replication and recombination. Plays a role in T4 DNA replication initiation by selecting and activating DNA origins. Acts by dissociating and reassociating with the DNA molecule being unwound. Unwinds DNA as a monomer in a 5'-3' direction at a rate of 250 bp/s and can efficiently displace proteins from the DNA. This chain is ATP-dependent DNA helicase dda (dda), found in Enterobacteria phage T4 (Bacteriophage T4).